The following is a 290-amino-acid chain: ATP synthase gamma chain (290 aa).

The protein belongs to the ATPase gamma chain family. In terms of assembly, F-type ATPases have 2 components, CF(1) - the catalytic core - and CF(0) - the membrane proton channel. CF(1) has five subunits: alpha(3), beta(3), gamma(1), delta(1), epsilon(1). CF(0) has four main subunits: a, b, b' and c.

It localises to the cellular chromatophore membrane. Its function is as follows. Produces ATP from ADP in the presence of a proton gradient across the membrane. The gamma chain is believed to be important in regulating ATPase activity and the flow of protons through the CF(0) complex. In Rhodobacter capsulatus (Rhodopseudomonas capsulata), this protein is ATP synthase gamma chain.